A 206-amino-acid polypeptide reads, in one-letter code: 2,3-bisphosphoglycerate-dependent phosphoglycerate mutase (206 aa).

Residues 9-16 (RHGQSEWN), 22-23 (TG), Arg61, 88-91 (ERDY), Lys99, 115-116 (RR), and 159-160 (GN) contribute to the substrate site. The Tele-phosphohistidine intermediate role is filled by His10. Glu88 functions as the Proton donor/acceptor in the catalytic mechanism.

Belongs to the phosphoglycerate mutase family. BPG-dependent PGAM subfamily. In terms of assembly, homodimer.

The catalysed reaction is (2R)-2-phosphoglycerate = (2R)-3-phosphoglycerate. It functions in the pathway carbohydrate degradation; glycolysis; pyruvate from D-glyceraldehyde 3-phosphate: step 3/5. In terms of biological role, catalyzes the interconversion of 2-phosphoglycerate and 3-phosphoglycerate. The sequence is that of 2,3-bisphosphoglycerate-dependent phosphoglycerate mutase from Brucella ovis (strain ATCC 25840 / 63/290 / NCTC 10512).